A 422-amino-acid chain; its full sequence is S100P-binding protein (422 aa).

3 disordered regions span residues 1–28 (MMCS…SWSS), 61–135 (LKDD…TPAK), and 170–292 (YVSE…DSGK). Positions 80-90 (DDSRNVEKGEK) are enriched in basic and acidic residues. The residue at position 195 (S195) is a Phosphoserine. Residues 231–241 (VSDKNMSDSKK) are compositionally biased toward basic and acidic residues. Residues 255-269 (TPNTGSSRRNGSYKS) show a composition bias toward polar residues. Residues 274 to 283 (KLPVSSSSSK) are compositionally biased toward low complexity.

As to quaternary structure, interacts with S100P.

It is found in the nucleus. This Bos taurus (Bovine) protein is S100P-binding protein.